Reading from the N-terminus, the 258-residue chain is Ubiquinone/menaquinone biosynthesis C-methyltransferase UbiE (258 aa).

Residues 1-21 (MSESRTSADGGMETSYGFREV) are disordered. S-adenosyl-L-methionine is bound by residues T81, D102, and 130 to 131 (NA).

The protein belongs to the class I-like SAM-binding methyltransferase superfamily. MenG/UbiE family.

It carries out the reaction a 2-demethylmenaquinol + S-adenosyl-L-methionine = a menaquinol + S-adenosyl-L-homocysteine + H(+). The catalysed reaction is a 2-methoxy-6-(all-trans-polyprenyl)benzene-1,4-diol + S-adenosyl-L-methionine = a 5-methoxy-2-methyl-3-(all-trans-polyprenyl)benzene-1,4-diol + S-adenosyl-L-homocysteine + H(+). The protein operates within quinol/quinone metabolism; menaquinone biosynthesis; menaquinol from 1,4-dihydroxy-2-naphthoate: step 2/2. It participates in cofactor biosynthesis; ubiquinone biosynthesis. Its function is as follows. Methyltransferase required for the conversion of demethylmenaquinol (DMKH2) to menaquinol (MKH2) and the conversion of 2-polyprenyl-6-methoxy-1,4-benzoquinol (DDMQH2) to 2-polyprenyl-3-methyl-6-methoxy-1,4-benzoquinol (DMQH2). The chain is Ubiquinone/menaquinone biosynthesis C-methyltransferase UbiE from Rhizobium johnstonii (strain DSM 114642 / LMG 32736 / 3841) (Rhizobium leguminosarum bv. viciae).